The sequence spans 242 residues: uncharacterized protein (242 aa).

Disordered stretches follow at residues 16 to 121 and 152 to 178; these read GLYK…GAMA and PVRP…TQPV. 2 stretches are compositionally biased toward pro residues: residues 50 to 64 and 97 to 113; these read PRPP…PSPA and EPRP…PPGP. A compositionally biased stretch (basic residues) spans 157-172; the sequence is KLPKGKGRLRRPRQSR. Threonine 175 carries the phosphothreonine modification. 5 positions are modified to phosphoserine: serine 192, serine 206, serine 216, serine 232, and serine 238. The tract at residues 215–242 is disordered; that stretch reads QSLSLQREPLGSCKLRNSLDSSDSDSAL. Residues 232–242 are compositionally biased toward low complexity; the sequence is SLDSSDSDSAL.

Its subcellular location is the cytoplasm. This is an uncharacterized protein from Rattus norvegicus (Rat).